A 1866-amino-acid chain; its full sequence is Protein strawberry notch homolog (1866 aa).

The span at 19 to 28 shows a compositional bias: low complexity; the sequence is QQSSPTPSTS. Disordered stretches follow at residues 19-63, 132-151, 156-253, 561-581, and 1112-1308; these read QQSS…HSSS, TAPTVNQSEPSTPTVTIVPK, LFET…GLPI, GMASPRLQTTPQPLTKSQKAK, and GLSG…ARGS. 2 stretches are compositionally biased toward polar residues: residues 37 to 63 and 134 to 146; these read QSFSNNTHTPSVSQFFDETSNDSHSSS and PTVNQSEPSTPTV. Residues 161–176 show a composition bias toward low complexity; that stretch reads TADSPTPSGDTSTTAS. Polar residues-rich tracts occupy residues 191-203 and 210-228; these read DRQNPMFVQTARS and TPSTSATVSPHITSSLTQR. Low complexity predominate over residues 229 to 239; sequence SHTSSPASSAS. The span at 566–577 shows a compositional bias: polar residues; sequence RLQTTPQPLTKS. Residues 1112-1126 show a composition bias toward low complexity; it reads GLSGIGRSSMSSSTG. Acidic residues predominate over residues 1142 to 1152; that stretch reads DGSDDEVENDM. Residues 1164–1177 show a composition bias toward basic and acidic residues; the sequence is ESAREEAEGARTLE. The span at 1194 to 1213 shows a compositional bias: acidic residues; sequence SSSDDSDEEVVKDEDEDEEA. Basic and acidic residues-rich tracts occupy residues 1262-1281 and 1290-1304; these read RDEEEAERLREKVRKREERR and RRAEREKQRRNEELQ.

The protein belongs to the SBNO family. As to expression, expressed in the somatic gonad, neurons, hypodermal cells, seam cells, the excretory system, and intestinal cells (at protein level).

Its subcellular location is the nucleus. Functionally, transcriptional activator that functions upstream of the let-60/Ras and let-23/EGFR signaling pathways to positively regulate lin-3 expression and thereby promote vulval induction. Plays a role in excretory duct development. Plays a role in male tail development. The polypeptide is Protein strawberry notch homolog (Caenorhabditis elegans).